We begin with the raw amino-acid sequence, 139 residues long: MGGWMSCGPPIYTPHTNSWTESGWDRTSWWRWSAQRWSGWSFKIVRANKALRVMAKTKMPLVLIPPSPNKPYSKLAINQELHLIPPKKTSPATSSSLKPPRRPRGCLNGRLSWRCPTLSRKVRVPTIKVPMVRAPSTPP.

The interval 83–109 is disordered; sequence LIPPKKTSPATSSSLKPPRRPRGCLNG. Low complexity predominate over residues 86 to 98; it reads PKKTSPATSSSLK.

To M.pneumoniae MPN_091 and MPN_463.

This is an uncharacterized protein from Mycoplasma pneumoniae (strain ATCC 29342 / M129 / Subtype 1) (Mycoplasmoides pneumoniae).